The sequence spans 617 residues: Probable Xaa-Pro aminopeptidase P (617 aa).

Mn(2+)-binding residues include D414, D425, E523, and E537.

The protein belongs to the peptidase M24B family. The cofactor is Mn(2+).

It carries out the reaction Release of any N-terminal amino acid, including proline, that is linked to proline, even from a dipeptide or tripeptide.. In terms of biological role, catalyzes the removal of a penultimate prolyl residue from the N-termini of peptides. This is Probable Xaa-Pro aminopeptidase P (AMPP) from Ajellomyces capsulatus (strain NAm1 / WU24) (Darling's disease fungus).